The chain runs to 142 residues: VapC ribonuclease R02377 (142 aa).

One can recognise a PINc domain in the interval 3–140; it reads FVDGSVIVAI…YKGNDFSQTD (138 aa). Mg(2+) is bound by residues Asp-5 and Asp-115.

The protein belongs to the PINc/VapC protein family. It depends on Mg(2+) as a cofactor.

Its function is as follows. Toxic component of a type II toxin-antitoxin (TA) system. An RNase. This Rhizobium meliloti (strain 1021) (Ensifer meliloti) protein is VapC ribonuclease R02377.